The following is a 123-amino-acid chain: WAP four-disulfide core domain protein 5 (123 aa).

The N-terminal stretch at 1 to 24 (MRIQSLLLLGALLAVGSQPPAAFG) is a signal peptide. 2 consecutive WAP domains span residues 27-73 (KGEK…CVPR) and 74-121 (VSVK…RDPA). 8 cysteine pairs are disulfide-bonded: Cys-34/Cys-62, Cys-41/Cys-66, Cys-49/Cys-61, Cys-55/Cys-70, Cys-81/Cys-109, Cys-88/Cys-113, Cys-96/Cys-108, and Cys-102/Cys-117.

The protein resides in the secreted. Functionally, putative acid-stable proteinase inhibitor. The polypeptide is WAP four-disulfide core domain protein 5 (WFDC5) (Saimiri boliviensis boliviensis (Bolivian squirrel monkey)).